Consider the following 274-residue polypeptide: Acetyl-coenzyme A carboxylase carboxyl transferase subunit alpha (274 aa).

The CoA carboxyltransferase C-terminal domain occupies 1–245 (MENSQELTPW…RENLKKAIEG (245 aa)).

The protein belongs to the AccA family. Acetyl-CoA carboxylase is a heterohexamer composed of biotin carboxyl carrier protein (AccB), biotin carboxylase (AccC) and two subunits each of ACCase subunit alpha (AccA) and ACCase subunit beta (AccD).

It is found in the cytoplasm. It carries out the reaction N(6)-carboxybiotinyl-L-lysyl-[protein] + acetyl-CoA = N(6)-biotinyl-L-lysyl-[protein] + malonyl-CoA. Its pathway is lipid metabolism; malonyl-CoA biosynthesis; malonyl-CoA from acetyl-CoA: step 1/1. Component of the acetyl coenzyme A carboxylase (ACC) complex. First, biotin carboxylase catalyzes the carboxylation of biotin on its carrier protein (BCCP) and then the CO(2) group is transferred by the carboxyltransferase to acetyl-CoA to form malonyl-CoA. This is Acetyl-coenzyme A carboxylase carboxyl transferase subunit alpha from Clostridium acetobutylicum (strain ATCC 824 / DSM 792 / JCM 1419 / IAM 19013 / LMG 5710 / NBRC 13948 / NRRL B-527 / VKM B-1787 / 2291 / W).